The chain runs to 214 residues: Urease accessory protein UreF (214 aa).

A disordered region spans residues 70–95; it reads AAAGEAGDAETDARTPSPAARAASRA. Over residues 83-95 the composition is skewed to low complexity; sequence RTPSPAARAASRA.

The protein belongs to the UreF family. As to quaternary structure, ureD, UreF and UreG form a complex that acts as a GTP-hydrolysis-dependent molecular chaperone, activating the urease apoprotein by helping to assemble the nickel containing metallocenter of UreC. The UreE protein probably delivers the nickel.

The protein localises to the cytoplasm. In terms of biological role, required for maturation of urease via the functional incorporation of the urease nickel metallocenter. In Mycolicibacterium vanbaalenii (strain DSM 7251 / JCM 13017 / BCRC 16820 / KCTC 9966 / NRRL B-24157 / PYR-1) (Mycobacterium vanbaalenii), this protein is Urease accessory protein UreF.